The following is a 118-amino-acid chain: MIHAIGTDLVELERIKSIGIDRFKDKILNEDEKNEYAKINHENRKLTYLAGRFAVKESLFKCFKAGDKTANYKDFSVLNDSVGAPYVVSKHTSDFVVHITISHTNLYAIAFVVLETKV.

The Mg(2+) site is built by Asp8 and Glu57.

This sequence belongs to the P-Pant transferase superfamily. AcpS family. The cofactor is Mg(2+).

Its subcellular location is the cytoplasm. The catalysed reaction is apo-[ACP] + CoA = holo-[ACP] + adenosine 3',5'-bisphosphate + H(+). Its function is as follows. Transfers the 4'-phosphopantetheine moiety from coenzyme A to a Ser of acyl-carrier-protein. The sequence is that of Holo-[acyl-carrier-protein] synthase from Acholeplasma laidlawii (strain PG-8A).